Here is a 574-residue protein sequence, read N- to C-terminus: 2-succinyl-5-enolpyruvyl-6-hydroxy-3-cyclohexene-1-carboxylate synthase (574 aa).

It belongs to the TPP enzyme family. MenD subfamily. Homodimer. The cofactor is Mg(2+). Mn(2+) is required as a cofactor. Thiamine diphosphate serves as cofactor.

The enzyme catalyses isochorismate + 2-oxoglutarate + H(+) = 5-enolpyruvoyl-6-hydroxy-2-succinyl-cyclohex-3-ene-1-carboxylate + CO2. Its pathway is quinol/quinone metabolism; 1,4-dihydroxy-2-naphthoate biosynthesis; 1,4-dihydroxy-2-naphthoate from chorismate: step 2/7. The protein operates within quinol/quinone metabolism; menaquinone biosynthesis. Functionally, catalyzes the thiamine diphosphate-dependent decarboxylation of 2-oxoglutarate and the subsequent addition of the resulting succinic semialdehyde-thiamine pyrophosphate anion to isochorismate to yield 2-succinyl-5-enolpyruvyl-6-hydroxy-3-cyclohexene-1-carboxylate (SEPHCHC). This chain is 2-succinyl-5-enolpyruvyl-6-hydroxy-3-cyclohexene-1-carboxylate synthase, found in Rubrobacter xylanophilus (strain DSM 9941 / JCM 11954 / NBRC 16129 / PRD-1).